A 316-amino-acid polypeptide reads, in one-letter code: Protein lifeguard 2 (316 aa).

The tract at residues M1–P53 is disordered. The next 3 helical transmembrane spans lie at V106 to F126, P138 to C158, and F165 to M185. N191 is a glycosylation site (N-linked (GlcNAc...) asparagine). 4 helical membrane-spanning segments follow: residues S194–F214, G225–L245, V250–A270, and I290–L310.

This sequence belongs to the BI1 family. LFG subfamily. As to quaternary structure, interacts with FAS/TNFRSF6 and BAX. Highly expressed in breast carcinoma tissues. Enhanced expression correlates with the grade of the tumor (grade II/grade III) in primary breast tumors (at protein level). Widely expressed. Expressed at high levels in the brain especially in the hippocampus.

Its subcellular location is the cell membrane. It is found in the membrane raft. It localises to the postsynaptic cell membrane. Antiapoptotic protein which protects cells uniquely from Fas-induced apoptosis. Regulates Fas-mediated apoptosis in neurons by interfering with caspase-8 activation. May play a role in cerebellar development by affecting cerebellar size, internal granular layer (IGL) thickness, and Purkinje cell (PC) development. In Homo sapiens (Human), this protein is Protein lifeguard 2 (FAIM2).